The following is a 477-amino-acid chain: Aspartyl/glutamyl-tRNA(Asn/Gln) amidotransferase subunit B (477 aa).

The protein belongs to the GatB/GatE family. GatB subfamily. As to quaternary structure, heterotrimer of A, B and C subunits.

It catalyses the reaction L-glutamyl-tRNA(Gln) + L-glutamine + ATP + H2O = L-glutaminyl-tRNA(Gln) + L-glutamate + ADP + phosphate + H(+). The catalysed reaction is L-aspartyl-tRNA(Asn) + L-glutamine + ATP + H2O = L-asparaginyl-tRNA(Asn) + L-glutamate + ADP + phosphate + 2 H(+). Functionally, allows the formation of correctly charged Asn-tRNA(Asn) or Gln-tRNA(Gln) through the transamidation of misacylated Asp-tRNA(Asn) or Glu-tRNA(Gln) in organisms which lack either or both of asparaginyl-tRNA or glutaminyl-tRNA synthetases. The reaction takes place in the presence of glutamine and ATP through an activated phospho-Asp-tRNA(Asn) or phospho-Glu-tRNA(Gln). This chain is Aspartyl/glutamyl-tRNA(Asn/Gln) amidotransferase subunit B, found in Bdellovibrio bacteriovorus (strain ATCC 15356 / DSM 50701 / NCIMB 9529 / HD100).